The following is a 546-amino-acid chain: (-)-5-epieremophilene synthase STPS2 (546 aa).

D299, D303, D442, T446, and E450 together coordinate Mg(2+). The DDXXD motif signature appears at 299–303 (DDTYD).

The protein belongs to the terpene synthase family. Tpsa subfamily. As to quaternary structure, monomer. The cofactor is Mg(2+). As to expression, highly expressed in leaves. Expressed at levels in flowers.

The enzyme catalyses (2E,6E)-farnesyl diphosphate = (-)-5-epi-eremophilene + diphosphate. It participates in secondary metabolite biosynthesis; terpenoid biosynthesis. In terms of biological role, sesquiterpene synthase that catalyzes the conversion of farnesyl diphosphate to (-)-5-epi-eremophilene. The protein is (-)-5-epieremophilene synthase STPS2 of Salvia miltiorrhiza (Chinese sage).